Here is a 98-residue protein sequence, read N- to C-terminus: C-X-C motif chemokine 10 (98 aa).

Residues Met-1–Gly-21 form the signal peptide. Position 26 is a citrulline (Arg-26). Intrachain disulfides connect Cys-30–Cys-57 and Cys-32–Cys-74.

Belongs to the intercrine alpha (chemokine CxC) family. As to quaternary structure, monomer, dimer, and tetramer. Interacts with CXCR3 (via N-terminus).

The protein localises to the secreted. Pro-inflammatory cytokine that is involved in a wide variety of processes such as chemotaxis, differentiation, and activation of peripheral immune cells, regulation of cell growth, apoptosis and modulation of angiostatic effects. Plays thereby an important role during viral infections by stimulating the activation and migration of immune cells to the infected sites. Mechanistically, binding of CXCL10 to the CXCR3 receptor activates G protein-mediated signaling and results in downstream activation of phospholipase C-dependent pathway, an increase in intracellular calcium production and actin reorganization. In turn, recruitment of activated Th1 lymphocytes occurs at sites of inflammation. Activation of the CXCL10/CXCR3 axis also plays an important role in neurons in response to brain injury for activating microglia, the resident macrophage population of the central nervous system, and directing them to the lesion site. This recruitment is an essential element for neuronal reorganization. The polypeptide is C-X-C motif chemokine 10 (CXCL10) (Canis lupus familiaris (Dog)).